A 249-amino-acid chain; its full sequence is Chromosome segregation and cytokinesis defective protein 1 (249 aa).

Residues 12–48 (VVAMADTLETRVKDLLEEYKKKLREVALQTAKAESDR) adopt a coiled-coil conformation. 3 disordered regions span residues 70–89 (PDDF…AAVA), 94–183 (LPSE…PEKP), and 208–249 (TTAT…GTSV). Residues 73 to 85 (FYIESGEEEEEGE) show a composition bias toward acidic residues. The span at 109-126 (QKTSIPIGQNSGRNTVQV) shows a compositional bias: polar residues. A compositionally biased stretch (low complexity) spans 224–236 (SGAASKKAAAAAG).

It belongs to the borealin family. Highly divergent. Component of the CPC complex which consists of icp-1; csc-1; bir-1 and air-2. Within the complex interacts with Aurora B/air-2, bir-1 and icp-1.

Its subcellular location is the nucleus. The protein localises to the chromosome. It localises to the centromere. It is found in the cytoplasm. The protein resides in the cytoskeleton. Its subcellular location is the spindle. Component of the chromosomal passenger complex (CPC), a complex that acts as a key regulator of chromosome segregation and cytokinesis during mitosis. The CPC complex has essential functions at the centromere in ensuring correct chromosome alignment and segregation. In the complex, it may be required to direct the Aurora B/air-2 to centromeric DNA. This chain is Chromosome segregation and cytokinesis defective protein 1 (csc-1), found in Caenorhabditis elegans.